The following is a 412-amino-acid chain: Multifunctional CCA protein (412 aa).

2 residues coordinate ATP: Gly-8 and Arg-11. Residues Gly-8 and Arg-11 each contribute to the CTP site. Glu-21 and Asp-23 together coordinate Mg(2+). ATP is bound by residues Arg-92, Arg-138, and Arg-141. The CTP site is built by Arg-92, Arg-138, and Arg-141. Positions Thr-227 to Trp-328 constitute an HD domain.

It belongs to the tRNA nucleotidyltransferase/poly(A) polymerase family. Bacterial CCA-adding enzyme type 1 subfamily. Monomer. Can also form homodimers and oligomers. Mg(2+) is required as a cofactor. Ni(2+) serves as cofactor.

The catalysed reaction is a tRNA precursor + 2 CTP + ATP = a tRNA with a 3' CCA end + 3 diphosphate. It catalyses the reaction a tRNA with a 3' CCA end + 2 CTP + ATP = a tRNA with a 3' CCACCA end + 3 diphosphate. Functionally, catalyzes the addition and repair of the essential 3'-terminal CCA sequence in tRNAs without using a nucleic acid template. Adds these three nucleotides in the order of C, C, and A to the tRNA nucleotide-73, using CTP and ATP as substrates and producing inorganic pyrophosphate. tRNA 3'-terminal CCA addition is required both for tRNA processing and repair. Also involved in tRNA surveillance by mediating tandem CCA addition to generate a CCACCA at the 3' terminus of unstable tRNAs. While stable tRNAs receive only 3'-terminal CCA, unstable tRNAs are marked with CCACCA and rapidly degraded. The sequence is that of Multifunctional CCA protein from Baumannia cicadellinicola subsp. Homalodisca coagulata.